A 178-amino-acid chain; its full sequence is Large ribosomal subunit protein bL25 (178 aa).

This sequence belongs to the bacterial ribosomal protein bL25 family. CTC subfamily. As to quaternary structure, part of the 50S ribosomal subunit; part of the 5S rRNA/L5/L18/L25 subcomplex. Contacts the 5S rRNA. Binds to the 5S rRNA independently of L5 and L18.

Functionally, this is one of the proteins that binds to the 5S RNA in the ribosome where it forms part of the central protuberance. This chain is Large ribosomal subunit protein bL25, found in Helicobacter pylori (strain P12).